A 178-amino-acid chain; its full sequence is Ribonuclease M5 (178 aa).

A Toprim domain is found at 10–94 (DGVIVCEGKT…YVDMNARLKN (85 aa)). Residues glutamate 16, aspartate 62, and aspartate 64 each contribute to the Mg(2+) site.

The protein belongs to the ribonuclease M5 family. It depends on Mg(2+) as a cofactor.

The protein localises to the cytoplasm. The catalysed reaction is Endonucleolytic cleavage of RNA, removing 21 and 42 nucleotides, respectively, from the 5'- and 3'-termini of a 5S-rRNA precursor.. Its function is as follows. Required for correct processing of both the 5' and 3' ends of 5S rRNA precursor. Cleaves both sides of a double-stranded region yielding mature 5S rRNA in one step. The sequence is that of Ribonuclease M5 (rnmV) from Mycoplasma genitalium (strain ATCC 33530 / DSM 19775 / NCTC 10195 / G37) (Mycoplasmoides genitalium).